The primary structure comprises 135 residues: Fluoride-specific ion channel FluC (135 aa).

The next 4 helical transmembrane spans lie at 12–32 (FLVI…LGLS), 42–62 (LGTL…VGIF), 70–90 (LAWK…FSTF), and 106–126 (AIGL…LGLL). The Na(+) site is built by glycine 82 and threonine 85.

It belongs to the fluoride channel Fluc/FEX (TC 1.A.43) family.

It is found in the cell inner membrane. The catalysed reaction is fluoride(in) = fluoride(out). Its activity is regulated as follows. Na(+) is not transported, but it plays an essential structural role and its presence is essential for fluoride channel function. Fluoride-specific ion channel. Important for reducing fluoride concentration in the cell, thus reducing its toxicity. The polypeptide is Fluoride-specific ion channel FluC (Dechloromonas aromatica (strain RCB)).